Reading from the N-terminus, the 436-residue chain is Glutamyl-tRNA reductase (436 aa).

Substrate-binding positions include 49–52, serine 109, 114–116, and glutamine 120; these read TCNR and EGQ. Catalysis depends on cysteine 50, which acts as the Nucleophile. 198 to 203 serves as a coordination point for NADP(+); sequence GAGRMS.

The protein belongs to the glutamyl-tRNA reductase family. As to quaternary structure, homodimer.

The enzyme catalyses (S)-4-amino-5-oxopentanoate + tRNA(Glu) + NADP(+) = L-glutamyl-tRNA(Glu) + NADPH + H(+). It participates in porphyrin-containing compound metabolism; protoporphyrin-IX biosynthesis; 5-aminolevulinate from L-glutamyl-tRNA(Glu): step 1/2. The protein operates within porphyrin-containing compound metabolism; chlorophyll biosynthesis. In terms of biological role, catalyzes the NADPH-dependent reduction of glutamyl-tRNA(Glu) to glutamate 1-semialdehyde (GSA). This Prochlorococcus marinus (strain MIT 9301) protein is Glutamyl-tRNA reductase.